Consider the following 175-residue polypeptide: Protein FLOWERING LOCUS T (175 aa).

This sequence belongs to the phosphatidylethanolamine-binding protein family. Interacts with FD/BZIP14 and FDP/BZIP27. Interacts with FTIP1/MCTP1 in phloem companion cells. Interacts with NAKR1. In terms of tissue distribution, mostly localized in leaves vasculature.

The protein resides in the cytoplasm. Its subcellular location is the nucleus. It is found in the endoplasmic reticulum. Component of the mobile flower-promoting signal (floral stimulus or florigen). Promotes the transition from vegetative growth to flowering. Required for 'SEPALLATA3' (SEP3) and 'FRUITFULL' (FUL) accumulation in mature rosette leaves. Seems to acts in parallel with 'LEAFY' to induce flowering by regulating 'APETALA1'. Translated in leaves and then transported to the shoot apical meristem where it activates the transcription of several floral meristem identity genes. May play a role in both the autonomous and the long-day flowering pathways. The chain is Protein FLOWERING LOCUS T from Arabidopsis thaliana (Mouse-ear cress).